Here is a 358-residue protein sequence, read N- to C-terminus: Triacylglycerol lipase (358 aa).

An N-terminal signal peptide occupies residues 1–39; it reads MVRSMRSRVAARAVAWALAVMPLAGAAGLTMAASPAAVA. Positions 48–327 constitute an AB hydrolase-1 domain; that stretch reads YPVILVHGLA…TSYHWNHLDE (280 aa). A substrate-binding site is contributed by leucine 56. Residue serine 126 is the Nucleophile of the active site. Residue glutamine 127 participates in substrate binding. A disulfide bridge links cysteine 229 with cysteine 308. Aspartate 280 contributes to the Ca(2+) binding site. Catalysis depends on charge relay system residues aspartate 302 and histidine 324. The Ca(2+) site is built by aspartate 326, glutamine 330, and valine 334.

The protein belongs to the AB hydrolase superfamily. Pseudomonas lipase family. In terms of assembly, monomer. Interacts with lipase-specific foldase Lif. Requires Ca(2+) as cofactor.

The protein resides in the secreted. The catalysed reaction is a triacylglycerol + H2O = a diacylglycerol + a fatty acid + H(+). Functionally, catalyzes the hydrolysis of triacylglycerol. This Burkholderia plantarii protein is Triacylglycerol lipase.